Here is a 539-residue protein sequence, read N- to C-terminus: Phosphoenolpyruvate carboxykinase (ATP) (539 aa).

The substrate site is built by Arg64, Tyr206, and Lys212. ATP contacts are provided by residues Lys212, His231, and 247 to 255 (GLSGTGKTT). Mn(2+)-binding residues include Lys212 and His231. A Mn(2+)-binding site is contributed by Asp268. Residues Glu296, Arg332, 448–449 (RI), and Thr454 contribute to the ATP site. Arg332 provides a ligand contact to substrate.

This sequence belongs to the phosphoenolpyruvate carboxykinase (ATP) family. As to quaternary structure, monomer. The cofactor is Mn(2+).

Its subcellular location is the cytoplasm. It carries out the reaction oxaloacetate + ATP = phosphoenolpyruvate + ADP + CO2. The protein operates within carbohydrate biosynthesis; gluconeogenesis. Involved in the gluconeogenesis. Catalyzes the conversion of oxaloacetate (OAA) to phosphoenolpyruvate (PEP) through direct phosphoryl transfer between the nucleoside triphosphate and OAA. The chain is Phosphoenolpyruvate carboxykinase (ATP) from Yersinia enterocolitica serotype O:8 / biotype 1B (strain NCTC 13174 / 8081).